The primary structure comprises 361 residues: MNISPTPKRYSSARSNRNENNIPSMYSDPLYNDNMNQGGGIGHLGGPRNIGNVPTEKIVPEEYRLNSQMINRLIKQNKELNNKLNSKQDEINRLNSLVGSLRAKLIKYTELNKKLNSDLQNFQNSEIINNSITEDVNDYIQVPKKRSVTLGTSPDSMSTPTILKNSHPVDEKINKLNDKLDKLTNLVLEEKSSQSTTSNKSTTPPVTSQPNLFFSKGPSDEDIMVKESVELKNLEDQIDSLKRKLLIKRENELRKISLNQELLELMDKLNLQNPSNAQQNFNNFDISPPLSRSNNESPEYCLECHNRHTSHSQSHNNHNISNKQQNSQYHHQHQKESYLKKPDLPISNPLDTPTPLNKRPT.

The tract at residues 1-24 (MNISPTPKRYSSARSNRNENNIPS) is disordered. Polar residues predominate over residues 12-24 (SARSNRNENNIPS). 2 coiled-coil regions span residues 61–125 (EEYR…FQNS) and 169–270 (VDEK…DKLN). 2 disordered regions span residues 189–219 (EEKS…KGPS) and 308–361 (HTSH…KRPT). 2 stretches are compositionally biased toward low complexity: residues 193–208 (SQST…PVTS) and 311–328 (HSQS…QNSQ). A compositionally biased stretch (basic and acidic residues) spans 334–343 (QKESYLKKPD).

It belongs to the SPC42 family.

It localises to the nucleus. The protein localises to the cytoplasm. It is found in the cytoskeleton. The protein resides in the microtubule organizing center. Its subcellular location is the spindle pole body. In terms of biological role, forms a polymeric layer at the periphery of the spindle pole body (SPB) central plaque which has an essential function during SPB duplication and may facilitate attachment of the SPB to the nuclear membrane. This is Spindle pole body component SPC42 (SPC42) from Vanderwaltozyma polyspora (strain ATCC 22028 / DSM 70294 / BCRC 21397 / CBS 2163 / NBRC 10782 / NRRL Y-8283 / UCD 57-17) (Kluyveromyces polysporus).